A 342-amino-acid polypeptide reads, in one-letter code: Dihydroorotase (342 aa).

Residues H13 and H15 each contribute to the Zn(2+) site. Substrate contacts are provided by residues 15–17 (HLR) and N41. Zn(2+) is bound by residues K99, H136, and H174. K99 is subject to N6-carboxylysine. H136 is a substrate binding site. Residue L218 participates in substrate binding. D246 contributes to the Zn(2+) binding site. The active site involves D246. The substrate site is built by H250 and A262.

This sequence belongs to the metallo-dependent hydrolases superfamily. DHOase family. Class II DHOase subfamily. Homodimer. Requires Zn(2+) as cofactor.

It carries out the reaction (S)-dihydroorotate + H2O = N-carbamoyl-L-aspartate + H(+). Its pathway is pyrimidine metabolism; UMP biosynthesis via de novo pathway; (S)-dihydroorotate from bicarbonate: step 3/3. Catalyzes the reversible cyclization of carbamoyl aspartate to dihydroorotate. The sequence is that of Dihydroorotase from Synechocystis sp. (strain ATCC 27184 / PCC 6803 / Kazusa).